Consider the following 344-residue polypeptide: C-C chemokine receptor-like 2 (344 aa).

At 1 to 43 (MANYTLAPEDEYDVLIEGELESDEAEQCDKYDAQALSAQLVPS) the chain is on the extracellular side. A glycan (N-linked (GlcNAc...) asparagine) is linked at Asn-3. The helical transmembrane segment at 44 to 64 (LCSAVFVIGVLDNLLVVLILV) threads the bilayer. The Cytoplasmic segment spans residues 65-74 (KYKGLKRVEN). The helical transmembrane segment at 75–95 (IYLLNLAVSNLCFLLTLPFWA) threads the bilayer. Topologically, residues 96–104 (HAGGDPMCK) are extracellular. A disulfide bond links Cys-103 and Cys-181. A helical membrane pass occupies residues 105 to 125 (ILIGLYFVGLYSETFFNCLLT). Over 126-144 (VQRYLVFLHKGNFFSARRR) the chain is Cytoplasmic. Residues 145-165 (VPCGIITSVLAWVTAILATLP) form a helical membrane-spanning segment. Over 166–198 (EFVVYKPQMEDQKYKCAFSRTPFLPADETFWKH) the chain is Extracellular. The chain crosses the membrane as a helical span at residues 199-219 (FLTLKMNISVLVLPLFIFTFL). The Cytoplasmic portion of the chain corresponds to 220–238 (YVQMRKTLRFREQRYSLFK). The helical transmembrane segment at 239–259 (LVFAIMVVFLLMWAPYNIAFF) threads the bilayer. At 260–286 (LSTFKEHFSLSDCKSSYNLDKSVHITK) the chain is on the extracellular side. The helical transmembrane segment at 287 to 307 (LIATTHCCINPLLYAFLDGTF) threads the bilayer. Residues 308–344 (SKYLCRCFHLRSNTPLQPRGQSAQGTSREEPDHSTEV) are Cytoplasmic-facing. Positions 324-333 (QPRGQSAQGT) are enriched in polar residues. Positions 324–344 (QPRGQSAQGTSREEPDHSTEV) are disordered. Basic and acidic residues predominate over residues 334-344 (SREEPDHSTEV).

The protein belongs to the G-protein coupled receptor 1 family. In terms of tissue distribution, expressed abundantly in immunal tissues such as spleen, fetal liver, lymph node and bone marrow. Strong expression also in lung and heart. Expressed in almost all hematopoietic cells including monocytes, macrophages, PMNs, T-cells (both CD4+ and CD8+), monocyte-derived iDCs, NK cells, and CD34+ progenitor cells. B-cells expressed isoform 1 but not isoform 2. Up-regulated on synovial neutrophils of rheumatoid arthritis patients.

The protein localises to the cell membrane. Receptor for CCL19 and chemerin/RARRES2. Does not appear to be a signaling receptor, but may have a role in modulating chemokine-triggered immune responses by capturing and internalizing CCL19 or by presenting RARRES2 ligand to CMKLR1, a functional signaling receptors. Plays a critical role for the development of Th2 responses. This Homo sapiens (Human) protein is C-C chemokine receptor-like 2 (CCRL2).